The chain runs to 476 residues: Cyclase-associated protein 1 (476 aa).

Disordered regions lie at residues 224–262 (KPASAPAKGPPGAPAPPPAPLFSAESSKPSSSSNQKQGM) and 277–319 (GLRK…PPKM). Over residues 231 to 243 (KGPPGAPAPPPAP) the composition is skewed to pro residues. Residues 246-256 (SAESSKPSSSS) show a composition bias toward low complexity. Positions 280-293 (KVTDDMKTKNRADR) are enriched in basic and acidic residues. Residues 316–453 (PPKMELQMGR…PDGDWVEHAL (138 aa)) form the C-CAP/cofactor C-like domain.

It belongs to the CAP family. As to expression, expressed in roots, cotyledons, leaves, stems, flowers, pollen and shoots. Not detected in siliques.

Actin monomer binding protein that accelerates the exchange of ADP for ATP. Regulates the pool of unpolymerized ATP-actin. Key intermediate between actin-depolymerizing factor (ADF)-mediated disassembly and the profilin-based nucleation and elongation machinery. The polypeptide is Cyclase-associated protein 1 (CAP1) (Arabidopsis thaliana (Mouse-ear cress)).